The sequence spans 435 residues: Putative magnesium transporter MRS2-H (435 aa).

The interval 19–54 (FSSSPESRRCRSVHRVPSRPRPPLAPPARVMGKGNS) is disordered. Transmembrane regions (helical) follow at residues 369-389 (LTLI…AAFA) and 408-428 (FVGA…TYAW).

The protein belongs to the CorA metal ion transporter (MIT) (TC 1.A.35.5) family.

It is found in the membrane. Functionally, putative magnesium transporter. The chain is Putative magnesium transporter MRS2-H (MRS2-H) from Oryza sativa subsp. indica (Rice).